The primary structure comprises 56 residues: Photosystem II reaction center protein K (56 aa).

A propeptide spanning residues 1–19 (MFNIFLDDAFIHSNNPFFG) is cleaved from the precursor. Residues 35–55 (MPIIPVLSFLLAFVWQAAVSF) form a helical membrane-spanning segment.

The protein belongs to the PsbK family. PSII is composed of 1 copy each of membrane proteins PsbA, PsbB, PsbC, PsbD, PsbE, PsbF, PsbH, PsbI, PsbJ, PsbK, PsbL, PsbM, PsbT, PsbX, PsbY, PsbZ, Psb30/Ycf12, at least 3 peripheral proteins of the oxygen-evolving complex and a large number of cofactors. It forms dimeric complexes.

Its subcellular location is the plastid. The protein resides in the chloroplast thylakoid membrane. Functionally, one of the components of the core complex of photosystem II (PSII). PSII is a light-driven water:plastoquinone oxidoreductase that uses light energy to abstract electrons from H(2)O, generating O(2) and a proton gradient subsequently used for ATP formation. It consists of a core antenna complex that captures photons, and an electron transfer chain that converts photonic excitation into a charge separation. This chain is Photosystem II reaction center protein K, found in Pinus thunbergii (Japanese black pine).